The sequence spans 165 residues: Lipoprotein signal peptidase (165 aa).

The next 3 membrane-spanning stretches (helical) occupy residues 6–26 (SSVEIGDSMIYIFLFLILLII), 68–88 (GKIDIVSILAVIAIGLILFYF), and 95–115 (ISFLERIAYTMIFSGAIGNMI). Active-site residues include aspartate 125 and aspartate 141. A helical transmembrane segment spans residues 132-152 (IWSFIFNFADVWINIGVVLII).

The protein belongs to the peptidase A8 family.

The protein resides in the cell inner membrane. The catalysed reaction is Release of signal peptides from bacterial membrane prolipoproteins. Hydrolyzes -Xaa-Yaa-Zaa-|-(S,diacylglyceryl)Cys-, in which Xaa is hydrophobic (preferably Leu), and Yaa (Ala or Ser) and Zaa (Gly or Ala) have small, neutral side chains.. It functions in the pathway protein modification; lipoprotein biosynthesis (signal peptide cleavage). Its function is as follows. This protein specifically catalyzes the removal of signal peptides from prolipoproteins. This is Lipoprotein signal peptidase from Fusobacterium nucleatum subsp. nucleatum (strain ATCC 25586 / DSM 15643 / BCRC 10681 / CIP 101130 / JCM 8532 / KCTC 2640 / LMG 13131 / VPI 4355).